The following is a 186-amino-acid chain: Negative modulator of initiation of replication (186 aa).

The protein belongs to the SeqA family. In terms of assembly, homodimer. Polymerizes to form helical filaments.

It localises to the cytoplasm. Functionally, negative regulator of replication initiation, which contributes to regulation of DNA replication and ensures that replication initiation occurs exactly once per chromosome per cell cycle. Binds to pairs of hemimethylated GATC sequences in the oriC region, thus preventing assembly of replication proteins and re-initiation at newly replicated origins. Repression is relieved when the region becomes fully methylated. In Haemophilus ducreyi (strain 35000HP / ATCC 700724), this protein is Negative modulator of initiation of replication.